Here is a 690-residue protein sequence, read N- to C-terminus: uncharacterized protein (690 aa).

Positions 553-601 are disordered; that stretch reads DESELLENEDKSESLENEDKSESLENEDKSESLENEDKSESLENEKKEK. Residues 560–601 are compositionally biased toward basic and acidic residues; sequence NEDKSESLENEDKSESLENEDKSESLENEDKSESLENEKKEK.

It belongs to the glycosyltransferase 2 family.

This is an uncharacterized protein from Rickettsia bellii (strain RML369-C).